Here is a 221-residue protein sequence, read N- to C-terminus: High frequency lysogenization protein HflD homolog (221 aa).

It belongs to the HflD family.

It is found in the cytoplasm. The protein localises to the cell inner membrane. The sequence is that of High frequency lysogenization protein HflD homolog from Acidithiobacillus ferrooxidans (strain ATCC 23270 / DSM 14882 / CIP 104768 / NCIMB 8455) (Ferrobacillus ferrooxidans (strain ATCC 23270)).